A 104-amino-acid chain; its full sequence is uncharacterized protein (104 aa).

This is an uncharacterized protein from Dictyostelium discoideum (Social amoeba).